The following is a 106-amino-acid chain: MNSFMTVGLGHYLAVAAVLLVLGIFGIFLNRKNVIVMLMSIELILLAVNLNMVAFSASLGDLAGQVFAMFILTVAAAEAAIGLAILVIYFRNRGSIQVEDVNLMKG.

Transmembrane regions (helical) follow at residues 9–29 (LGHY…GIFL), 35–55 (IVML…MVAF), and 70–90 (FILT…VIYF).

Belongs to the complex I subunit 4L family. In terms of assembly, NDH-1 is composed of 14 different subunits. Subunits NuoA, H, J, K, L, M, N constitute the membrane sector of the complex.

The protein localises to the cell inner membrane. It carries out the reaction a quinone + NADH + 5 H(+)(in) = a quinol + NAD(+) + 4 H(+)(out). NDH-1 shuttles electrons from NADH, via FMN and iron-sulfur (Fe-S) centers, to quinones in the respiratory chain. The immediate electron acceptor for the enzyme in this species is believed to be ubiquinone. Couples the redox reaction to proton translocation (for every two electrons transferred, four hydrogen ions are translocated across the cytoplasmic membrane), and thus conserves the redox energy in a proton gradient. The sequence is that of NADH-quinone oxidoreductase subunit K from Granulibacter bethesdensis (strain ATCC BAA-1260 / CGDNIH1).